Reading from the N-terminus, the 333-residue chain is Nuclear egress protein 1 (333 aa).

The segment at 45–64 (SRRYKSVSRSGPSMRVRSRT) is disordered. The CCCH-type zinc finger occupies 128–251 (CLSLSGMGYH…YVIFPGKSVH (124 aa)).

The protein belongs to the herpesviridae NEC1 protein family. In terms of assembly, forms a heterohexameric complex with NEC2. Interacts with capsid vertex specific component 2/CVC2; this interaction directs the capsid to the host inner nuclear membrane to initiate budding. Phosphorylated at serine residues in the N-terminus. This phosphorylation regulates the localization within the inner nuclear membrane.

It localises to the host nucleus inner membrane. Plays an essential role in virion nuclear egress, the first step of virion release from infected cell. Within the host nucleus, NEC1 interacts with the newly formed capsid through the vertexes and directs it to the inner nuclear membrane by associating with NEC2. Induces the budding of the capsid at the inner nuclear membrane as well as its envelopment into the perinuclear space. There, the NEC1/NEC2 complex promotes the fusion of the enveloped capsid with the outer nuclear membrane and the subsequent release of the viral capsid into the cytoplasm where it will reach the secondary budding sites in the host Golgi or trans-Golgi network. The sequence is that of Nuclear egress protein 1 from Varicella-zoster virus (strain Dumas) (HHV-3).